The sequence spans 173 residues: Co-chaperone protein HscB homolog (173 aa).

A J domain is found at 5-77 (CHFALFDLQP…PRRARYLLAI (73 aa)).

Belongs to the HscB family. As to quaternary structure, interacts with HscA and stimulates its ATPase activity.

In terms of biological role, co-chaperone involved in the maturation of iron-sulfur cluster-containing proteins. Seems to help targeting proteins to be folded toward HscA. The chain is Co-chaperone protein HscB homolog from Pseudomonas putida (strain W619).